The following is a 205-amino-acid chain: Small ribosomal subunit protein uS4 (205 aa).

The tract at residues 18-46 (NIWGRPKSPVNRREYGPGQHGQRRKGKLS) is disordered. The 64-residue stretch at 94 to 157 (RRLDTVVYRS…KQLAIVLEAN (64 aa)) folds into the S4 RNA-binding domain.

It belongs to the universal ribosomal protein uS4 family. As to quaternary structure, part of the 30S ribosomal subunit. Contacts protein S5. The interaction surface between S4 and S5 is involved in control of translational fidelity.

One of the primary rRNA binding proteins, it binds directly to 16S rRNA where it nucleates assembly of the body of the 30S subunit. In terms of biological role, with S5 and S12 plays an important role in translational accuracy. The sequence is that of Small ribosomal subunit protein uS4 from Rhodopseudomonas palustris (strain BisB5).